We begin with the raw amino-acid sequence, 407 residues long: Putative aspartate aminotransferase, cytoplasmic 2 (407 aa).

The residue at position 249 (lysine 249) is an N6-(pyridoxal phosphate)lysine.

Belongs to the class-I pyridoxal-phosphate-dependent aminotransferase family. In terms of assembly, homodimer. Pyridoxal 5'-phosphate is required as a cofactor.

The protein localises to the cytoplasm. The catalysed reaction is L-aspartate + 2-oxoglutarate = oxaloacetate + L-glutamate. The protein is Putative aspartate aminotransferase, cytoplasmic 2 (GOT1L1) of Bos taurus (Bovine).